The sequence spans 284 residues: 2-dehydro-3-deoxyphosphooctonate aldolase (284 aa).

It belongs to the KdsA family.

It is found in the cytoplasm. It catalyses the reaction D-arabinose 5-phosphate + phosphoenolpyruvate + H2O = 3-deoxy-alpha-D-manno-2-octulosonate-8-phosphate + phosphate. The protein operates within carbohydrate biosynthesis; 3-deoxy-D-manno-octulosonate biosynthesis; 3-deoxy-D-manno-octulosonate from D-ribulose 5-phosphate: step 2/3. It participates in bacterial outer membrane biogenesis; lipopolysaccharide biosynthesis. The polypeptide is 2-dehydro-3-deoxyphosphooctonate aldolase (Burkholderia orbicola (strain MC0-3)).